A 509-amino-acid chain; its full sequence is tRNA-2-methylthio-N(6)-dimethylallyladenosine synthase (509 aa).

Residues 1–13 are compositionally biased toward polar residues; it reads MNEQQRLASQQAN. The interval 1-26 is disordered; sequence MNEQQRLASQQANSSKKKEEKDYSKY. Basic and acidic residues predominate over residues 16–25; sequence KKKEEKDYSK. One can recognise an MTTase N-terminal domain in the interval 66–184; the sequence is RKFYIRTYGC…LPYILKDAMF (119 aa). 6 residues coordinate [4Fe-4S] cluster: C75, C111, C145, C221, C225, and C228. In terms of domain architecture, Radical SAM core spans 207–437; sequence RRGDIKAWVN…NALVNKLAIE (231 aa). The TRAM domain maps to 440–503; sequence NRYKGQIVEV…TWSLNGELVE (64 aa).

The protein belongs to the methylthiotransferase family. MiaB subfamily. Monomer. Requires [4Fe-4S] cluster as cofactor.

The protein localises to the cytoplasm. It catalyses the reaction N(6)-dimethylallyladenosine(37) in tRNA + (sulfur carrier)-SH + AH2 + 2 S-adenosyl-L-methionine = 2-methylsulfanyl-N(6)-dimethylallyladenosine(37) in tRNA + (sulfur carrier)-H + 5'-deoxyadenosine + L-methionine + A + S-adenosyl-L-homocysteine + 2 H(+). In terms of biological role, catalyzes the methylthiolation of N6-(dimethylallyl)adenosine (i(6)A), leading to the formation of 2-methylthio-N6-(dimethylallyl)adenosine (ms(2)i(6)A) at position 37 in tRNAs that read codons beginning with uridine. This is tRNA-2-methylthio-N(6)-dimethylallyladenosine synthase from Bacillus cereus (strain ATCC 10987 / NRS 248).